The following is a 95-amino-acid chain: Large ribosomal subunit protein bL27 (95 aa).

A propeptide spanning residues 1–10 is cleaved from the precursor; the sequence is MLLTMNLQLF. The interval 12-38 is disordered; the sequence is HKKGGGSTSNGRDSESKRLGAKSADGQ.

Belongs to the bacterial ribosomal protein bL27 family. The N-terminus is cleaved by ribosomal processing cysteine protease Prp.

The polypeptide is Large ribosomal subunit protein bL27 (Enterococcus faecalis (strain ATCC 700802 / V583)).